The chain runs to 202 residues: MQRAWILLTLGLMACVSAETRTELTSDKDMYLDNSSIEEASGVYPIDDDDYSSASGSGADEDIESPVLTTSQLIPRIPLTSAASPKVETMTLKTQSITPAQTESPEETDKEEVDISEAEEKLGPAIKSTDVYTEKHSDNLFKRTEVLAAVIAGGVIGFLFAIFLILLLVYRMRKKDEGSYDLGERKPSSAAYQKAPTKEFYA.

Positions 1 to 18 (MQRAWILLTLGLMACVSA) are cleaved as a signal peptide. Over 19-145 (ETRTELTSDK…HSDNLFKRTE (127 aa)) the chain is Extracellular. O-linked (Xyl...) (glycosaminoglycan) serine glycans are attached at residues serine 41, serine 55, and serine 57. Disordered stretches follow at residues 41–63 (SGVYPIDDDDYSSASGSGADEDI) and 88–118 (ETMTLKTQSITPAQTESPEETDKEEVDISEA). Residues 91 to 103 (TLKTQSITPAQTE) are compositionally biased toward polar residues. The span at 104 to 117 (SPEETDKEEVDISE) shows a compositional bias: acidic residues. Serine 116 carries the phosphoserine modification. A helical membrane pass occupies residues 146–170 (VLAAVIAGGVIGFLFAIFLILLLVY). Residues 171–202 (RMRKKDEGSYDLGERKPSSAAYQKAPTKEFYA) are Cytoplasmic-facing. The disordered stretch occupies residues 179 to 202 (SYDLGERKPSSAAYQKAPTKEFYA). At serine 188 the chain carries Phosphoserine.

This sequence belongs to the syndecan proteoglycan family. As to quaternary structure, interacts (via cytoplasmic domain) with SARM1. Forms a complex with SDCBP and PDCD6IP. In terms of processing, O-glycosylated; contains both heparan sulfate and chondroitin sulfate. Phosphorylated on serine residues. As to expression, preferential expression in cells of mesenchymal origin.

Its subcellular location is the membrane. Functionally, cell surface proteoglycan which regulates dendritic arbor morphogenesis. This Mus musculus (Mouse) protein is Syndecan-2 (Sdc2).